A 401-amino-acid chain; its full sequence is Exodeoxyribonuclease 7 large subunit (401 aa).

It belongs to the XseA family. In terms of assembly, heterooligomer composed of large and small subunits.

It localises to the cytoplasm. It carries out the reaction Exonucleolytic cleavage in either 5'- to 3'- or 3'- to 5'-direction to yield nucleoside 5'-phosphates.. Its function is as follows. Bidirectionally degrades single-stranded DNA into large acid-insoluble oligonucleotides, which are then degraded further into small acid-soluble oligonucleotides. The sequence is that of Exodeoxyribonuclease 7 large subunit from Thermoanaerobacter pseudethanolicus (strain ATCC 33223 / 39E) (Clostridium thermohydrosulfuricum).